The primary structure comprises 299 residues: B-box zinc finger protein 22 (299 aa).

The Zn(2+) site is built by Cys-5, Cys-8, Cys-28, His-33, Cys-57, Cys-60, Cys-80, and His-85. A B box-type 1; atypical zinc finger spans residues 5–47; the sequence is CNVCEAAEATVLCCADEAALCWACDEKIHAANKLAGKHQRVPL. A B box-type 2; atypical zinc finger spans residues 57 to 99; sequence CDICQEASGFFFCLQDRALLCRKCDVAIHTVNPHVSAHQRFLL. Disordered stretches follow at residues 143–181 and 206–299; these read FDHHHHQQQQEQQEGVIPGTKVNDQTSTKLPLVSSGSTT and ENNG…RRRF. Composition is skewed to polar residues over residues 164-181, 251-260, and 277-290; these read VNDQTSTKLPLVSSGSTT, QIQSPPTASG, and ITSSTPYTGSSPNQ.

Interacts with HY5. In terms of processing, ubiquitinated by COP1 in vitro. COP1-mediated degradation of BBX22 by the proteasome occurs in the dark and is important for a precise skotomorphogenesis process and optimization of seedling growth under short days conditions.

The protein resides in the nucleus. Functionally, acts as a positive regulator of seedling photomorphogenesis and light-regulated inhibition of hypocotyl elongation, independently and in concert with HY5 and BBX21. Acts as a positive regulator of de-etiolation and influences chloroplast biogenesis and function through regulation of genes encoding chloroplast proteins. Acts downstream of COP1 and plays an important role in early and long-term adjustment of the shade avoidance syndrome (SAS) responses in natural environments. Regulates the expression of genes responsive to light hormone signals which may contribute to optimal seedling development. The chain is B-box zinc finger protein 22 from Arabidopsis thaliana (Mouse-ear cress).